A 57-amino-acid polypeptide reads, in one-letter code: COP9 signalosome complex subunit 9 (57 aa).

At threonine 26 the chain carries Phosphothreonine.

The protein belongs to the CSN9 family. As to quaternary structure, component of the CSN complex, composed of COPS1/GPS1, COPS2, COPS3, COPS4, COPS5, COPS6, COPS7 (COPS7A or COPS7B), COPS8 and COPS9. In the complex, it interacts directly with COPS3, COPS5 and COPS6.

The protein resides in the nucleus. It is found in the cytoplasm. It localises to the nucleoplasm. Functionally, component of the COP9 signalosome complex (CSN), a complex involved in various cellular and developmental processes. The CSN complex is an essential regulator of the ubiquitin (Ubl) conjugation pathway by mediating the deneddylation of the cullin subunits of SCF-type E3 ligase complexes, leading to decrease the Ubl ligase activity of SCF-type complexes such as SCF, CSA or DDB2. The complex is also involved in phosphorylation of p53/TP53, c-jun/JUN, IkappaBalpha/NFKBIA, ITPK1 and IRF8/ICSBP, possibly via its association with CK2 and PKD kinases. CSN-dependent phosphorylation of TP53 and JUN promotes and protects degradation by the Ubl system, respectively. Plays a role in cell proliferation. In Mus musculus (Mouse), this protein is COP9 signalosome complex subunit 9.